We begin with the raw amino-acid sequence, 190 residues long: Adenylate kinase (190 aa).

11–16 (GAGKGT) is an ATP binding site. The NMP stretch occupies residues 31–60 (STGDIFRFNIKNETELGKLAKTFMDKGDLV). Residues Thr-32, Arg-37, 58-60 (DLV), 86-89 (GFPR), and Gln-93 each bind AMP. An LID region spans residues 127–137 (ERGKTSGRVDD). Arg-128 is an ATP binding site. Residues Arg-134 and Arg-146 each contribute to the AMP site. Gly-174 lines the ATP pocket.

This sequence belongs to the adenylate kinase family. As to quaternary structure, monomer.

Its subcellular location is the cytoplasm. It catalyses the reaction AMP + ATP = 2 ADP. The protein operates within purine metabolism; AMP biosynthesis via salvage pathway; AMP from ADP: step 1/1. Its function is as follows. Catalyzes the reversible transfer of the terminal phosphate group between ATP and AMP. Plays an important role in cellular energy homeostasis and in adenine nucleotide metabolism. The chain is Adenylate kinase from Flavobacterium psychrophilum (strain ATCC 49511 / DSM 21280 / CIP 103535 / JIP02/86).